A 1027-amino-acid polypeptide reads, in one-letter code: MRLYVYILQAKDLPAKETFAKLHVGRHKSKTRVARDTSSPIWNEEFVFRISDVDEGDDVVVSILHHEQQDHQSIVSTGLIGKVRIPLTSVAAEENQTLLPTWFVIEKPSDGKFVNIECGKILLSLSLQGKWESTSGEKVLNDKQDIINLEGVKELEGSPKDLISSRDGKRRKHHDGKHIMKNIVNHIDKLFHKKEEISKRLHDESSVGQSVNSNYEDATDQCSSSATCTGFEEGLDLMQSSDSEREEMPENLTGGVLVDQKYLVSPCELNKFLFTPSSQFRKELAELQGLSDVQEGPWTMMQEDTPRLTRVVTYMRAATKMVKAVKATENQVYRKASGKQFAVFVSVSTPDVPYGNTFKIELLYKILPETEPTAGGEASRLIISWGIQFSQSTIMKGMIEGGARQGLKESFEQFSNLLAKTYKTLDPAVVLDKEQVIATVQSEPKTDLKSAFLYFWSSSVICAVLLSVYVVVHMLHCEPSKIQGFEFYGLDLPDSFGELFSSGILVLLLERVYIMTVHFVQARLHRGRDQGVKANGKGWILTIALIKGTNLASVEATELFDPYVVFTCNGKTRTSSVKLQAQDPQWNEVIEFDAMEEPPSVLDVEVFDFDGPFDQGASLGHAEINFLKHTADELADLSVALVGNHAQASQSKLQLRIFLENKNGVETMKDYLSKVEKEVGKKLNIRSPQKNSAFQKLFGLPHEEFLLKEYTCYLKRKLPVQGKLFLSARIVAFYSNVFGHKTKFYFLWEDIDDIQVLPPTFASLGSPLLLIILKKNRGLDAKHGAKSQDDEGRLSFYFQSFVSFDATSRTIMALWKTRTLSVDHRAQIVEEDQDVADPFLLPEAVTVVSDADALMMSKVYTCDLPCDVELVMKIFGGGELERKIMEKSGCLSYASTTWESKKPGVYERRLSYKYNHYVSVFGGGVTCAQQKSPAPNDEGWILNEIVALHDVPFGDHFRVHIRYEVKKAGVDCKTSKCEVYLKIRWLKTIKFEQRISKSIMEKFRNRFKVIFDLFQKESVANSSLTLL.

The C2 1 domain maps to 1–103; it reads MRLYVYILQA…ENQTLLPTWF (103 aa). The segment covering 158 to 167 has biased composition (basic and acidic residues); that stretch reads SPKDLISSRD. 2 disordered regions span residues 158–177 and 201–223; these read SPKD…HDGK and LHDE…DQCS. Basic residues predominate over residues 168 to 177; that stretch reads GKRRKHHDGK. Positions 206–223 are enriched in polar residues; it reads SVGQSVNSNYEDATDQCS. In terms of domain architecture, VASt 1 spans 253-426; the sequence is TGGVLVDQKY…LLAKTYKTLD (174 aa). A helical membrane pass occupies residues 452-472; sequence FLYFWSSSVICAVLLSVYVVV. A C2 2 domain is found at 516–639; sequence TVHFVQARLH…TADELADLSV (124 aa). Positions 693 to 756 constitute a GRAM domain; it reads AFQKLFGLPH…LWEDIDDIQV (64 aa). One can recognise a VASt 2 domain in the interval 855–1018; sequence MMSKVYTCDL…VIFDLFQKES (164 aa).

It localises to the membrane. The protein is C2 and GRAM domain-containing protein At5g50170 of Arabidopsis thaliana (Mouse-ear cress).